A 713-amino-acid chain; its full sequence is Phosphoribosylformylglycinamidine synthase subunit PurL (713 aa).

The active site involves H32. Y35 contacts ATP. Residue E76 participates in Mg(2+) binding. Substrate is bound by residues 77-80 (SHNH) and R99. The active-site Proton acceptor is H78. D100 lines the Mg(2+) pocket. Q224 contributes to the substrate binding site. D252 is a Mg(2+) binding site. 296–298 (ESQ) is a substrate binding site. The ATP site is built by D471 and G508. N509 contacts Mg(2+). Position 511 (S511) interacts with substrate.

The protein belongs to the FGAMS family. As to quaternary structure, monomer. Part of the FGAM synthase complex composed of 1 PurL, 1 PurQ and 2 PurS subunits.

The protein resides in the cytoplasm. The catalysed reaction is N(2)-formyl-N(1)-(5-phospho-beta-D-ribosyl)glycinamide + L-glutamine + ATP + H2O = 2-formamido-N(1)-(5-O-phospho-beta-D-ribosyl)acetamidine + L-glutamate + ADP + phosphate + H(+). Its pathway is purine metabolism; IMP biosynthesis via de novo pathway; 5-amino-1-(5-phospho-D-ribosyl)imidazole from N(2)-formyl-N(1)-(5-phospho-D-ribosyl)glycinamide: step 1/2. In terms of biological role, part of the phosphoribosylformylglycinamidine synthase complex involved in the purines biosynthetic pathway. Catalyzes the ATP-dependent conversion of formylglycinamide ribonucleotide (FGAR) and glutamine to yield formylglycinamidine ribonucleotide (FGAM) and glutamate. The FGAM synthase complex is composed of three subunits. PurQ produces an ammonia molecule by converting glutamine to glutamate. PurL transfers the ammonia molecule to FGAR to form FGAM in an ATP-dependent manner. PurS interacts with PurQ and PurL and is thought to assist in the transfer of the ammonia molecule from PurQ to PurL. The chain is Phosphoribosylformylglycinamidine synthase subunit PurL from Thermococcus kodakarensis (strain ATCC BAA-918 / JCM 12380 / KOD1) (Pyrococcus kodakaraensis (strain KOD1)).